Here is a 93-residue protein sequence, read N- to C-terminus: Small ribosomal subunit protein bS20c (93 aa).

This sequence belongs to the bacterial ribosomal protein bS20 family.

Its subcellular location is the plastid. The protein resides in the chloroplast. Its function is as follows. Binds directly to 16S ribosomal RNA. The polypeptide is Small ribosomal subunit protein bS20c (Trieres chinensis (Marine centric diatom)).